A 579-amino-acid polypeptide reads, in one-letter code: Methionine--tRNA ligase (579 aa).

The short motif at 14 to 24 (PYINGVKHLGN) is the 'HIGH' region element. The Zn(2+) site is built by Cys-146, Cys-149, Cys-159, and Cys-162. The 'KMSKS' region signature appears at 346 to 350 (KFSTS). Thr-349 provides a ligand contact to ATP.

This sequence belongs to the class-I aminoacyl-tRNA synthetase family. MetG type 1 subfamily. Monomer. Zn(2+) serves as cofactor.

It is found in the cytoplasm. The enzyme catalyses tRNA(Met) + L-methionine + ATP = L-methionyl-tRNA(Met) + AMP + diphosphate. In terms of biological role, is required not only for elongation of protein synthesis but also for the initiation of all mRNA translation through initiator tRNA(fMet) aminoacylation. This Hyphomonas neptunium (strain ATCC 15444) protein is Methionine--tRNA ligase.